The primary structure comprises 105 residues: Fe-S protein maturation auxiliary factor PG_1777 (105 aa).

This sequence belongs to the Fe-S cluster assembly domain superfamily. MIP18-like family. Putative homodimer; may be disulfide-linked.

In terms of biological role, iron binding protein that protects DNA from Fenton chemistry-mediated damage caused by hydrogen peroxide induced oxidative stress. May be involved in iron-sulfur cluster assembly. The polypeptide is Fe-S protein maturation auxiliary factor PG_1777 (Porphyromonas gingivalis (strain ATCC BAA-308 / W83)).